The primary structure comprises 596 residues: MGNEKLRKDLHRTIRTRDLNAVKHIILKKYTFSNKNALSTPLYLAVSNSDIDIVKFLLDNGADINKCKSPPLHKAINLGNVEMVKLLVDHGADIEKVYLGNSPLYLALCKRNTNITKYLLERGADPNTLFINYCDAIYNKIPIDIFKILIKYKVSLNIQNSHFKTPIYYAIKCTNYPLIKLLLENNASLTIPEGYNNHYLITAVKHNCDISILRLLIKYGVPVNEQDDLERTSLHYCVSAGKHDILKLLLDYDADPNITDSCLGTPLHYAVSRNDIIATTLLIEKGANVNIHNDTIDTVLNIAVGNRNKILINLLLMYGANTRLKSRNPLIHKALETKDINILSEILNHGAEVNIYNREGYTPLYIAIITFMQIKFAKLLLRYGSNPNMKNESNENTPLHGAILSNRLDSVELLMSYNVDVHSINKLGHTPLSCINYISDKIATIIISKIVLDLEKDSNLFLLDGFKANIECIDQNDRFKVIRKNCEDELKSIRNIKLNHRYSLSIFLHSDNNNNILIRFLNHPKVEKLSSCISIYKKYIQKTKLSSSIRYKLIHDAIEYSNNISMINSVPINVKYMIMEMLDNKDLKSIIDSVNK.

13 ANK repeats span residues 5–34 (KLRK…TFSN), 37–66 (ALST…DINK), 68–96 (KSPP…DIEK), 99–128 (LGNS…DPNT), 130–158 (FINY…SLNI), 162–191 (HFKT…SLTI), 195–225 (YNNH…PVNE), 229–258 (LERT…DPNI), 262–291 (CLGT…NVNI), 295–324 (TIDT…NTRL), 326–355 (SRNP…EVNI), 359–389 (EGYT…NPNM), and 394–423 (NENT…DVHS).

This Fowlpox virus (strain NVSL) (FPV) protein is Putative ankyrin repeat protein FPV024.